Here is a 387-residue protein sequence, read N- to C-terminus: MSVIKMTDLELAGKRVFIRADLNVPVKDGKVTSDARILASLPTIKLCLEAGAKVMVTSHLGRPTEGEYNEEFSLAPVVNYLNDALDCDVKLAKDYLDGLELNAGELVVLENVRFNKGEKKNEEELSKKYAALCDIFVMDAFGTAHRAQASTHGVGMNAPVACAGPLLAAELEALGKAMDNPERPLVAIVGGSKVSTKLTVLESLSKIADQLVVGGGIANTFIAAEGHNVGKSLYEADLVETAQKLMKECAIPVATDVACAKAFDENAEAEIKHVSEVQDDDMIFDLGPDSTAALAEIIGNAKTILWNGPVGVFEFKNFEAGTAGISKAIAESAGFSVAGGGDTLAAIDKFGIKADVSYISTGGGAFLEFVEGKVLPAVAMLEERAKA.

Substrate contacts are provided by residues 21–23 (DLN), Arg36, 59–62 (HLGR), Arg113, and Arg146. ATP-binding positions include Lys197, Glu314, and 340 to 343 (GGDT).

The protein belongs to the phosphoglycerate kinase family. As to quaternary structure, monomer.

The protein resides in the cytoplasm. The catalysed reaction is (2R)-3-phosphoglycerate + ATP = (2R)-3-phospho-glyceroyl phosphate + ADP. The protein operates within carbohydrate degradation; glycolysis; pyruvate from D-glyceraldehyde 3-phosphate: step 2/5. The chain is Phosphoglycerate kinase from Aliivibrio fischeri (strain MJ11) (Vibrio fischeri).